Consider the following 119-residue polypeptide: Aspartate 1-decarboxylase (119 aa).

S25 functions as the Schiff-base intermediate with substrate; via pyruvic acid in the catalytic mechanism. A Pyruvic acid (Ser) modification is found at S25. Residue T57 participates in substrate binding. The active-site Proton donor is Y58. 73–75 (GAA) serves as a coordination point for substrate.

The protein belongs to the PanD family. In terms of assembly, heterooctamer of four alpha and four beta subunits. Requires pyruvate as cofactor. Is synthesized initially as an inactive proenzyme, which is activated by self-cleavage at a specific serine bond to produce a beta-subunit with a hydroxyl group at its C-terminus and an alpha-subunit with a pyruvoyl group at its N-terminus.

The protein localises to the cytoplasm. The enzyme catalyses L-aspartate + H(+) = beta-alanine + CO2. The protein operates within cofactor biosynthesis; (R)-pantothenate biosynthesis; beta-alanine from L-aspartate: step 1/1. In terms of biological role, catalyzes the pyruvoyl-dependent decarboxylation of aspartate to produce beta-alanine. In Herminiimonas arsenicoxydans, this protein is Aspartate 1-decarboxylase.